The primary structure comprises 950 residues: Serine/threonine-protein kinase atg1 (950 aa).

The 306-residue stretch at 6-311 folds into the Protein kinase domain; sequence YTRLDEIGRG…FPDFFENGVI (306 aa). ATP-binding positions include 12-20 and K35; that span reads IGRGSFATV. The active-site Proton acceptor is the D149. 5 disordered regions span residues 314–425, 443–467, 505–570, 671–690, and 926–950; these read PIPG…HATA, RQRG…LREE, QGGI…QSPT, VQTD…NPDS, and PTPS…TPPK. 3 stretches are compositionally biased toward polar residues: residues 370 to 389, 447 to 458, and 511 to 520; these read GLTQ…PTTT, RNTFSEGSPQTD, and GAQTGALSRR. Positions 549–565 are enriched in basic and acidic residues; sequence SRADSMHNRQSSYERRY.

Belongs to the protein kinase superfamily. Ser/Thr protein kinase family. APG1/unc-51/ULK1 subfamily. As to quaternary structure, homodimer. Forms a ternary complex with ATG13 and ATG17.

The protein resides in the cytoplasm. It localises to the preautophagosomal structure membrane. It carries out the reaction L-seryl-[protein] + ATP = O-phospho-L-seryl-[protein] + ADP + H(+). It catalyses the reaction L-threonyl-[protein] + ATP = O-phospho-L-threonyl-[protein] + ADP + H(+). Functionally, serine/threonine protein kinase involved in the cytoplasm to vacuole transport (Cvt) and found to be essential in autophagy, where it is required for the formation of autophagosomes. Involved in the clearance of protein aggregates which cannot be efficiently cleared by the proteasome. Required for selective autophagic degradation of the nucleus (nucleophagy) as well as for mitophagy which contributes to regulate mitochondrial quantity and quality by eliminating the mitochondria to a basal level to fulfill cellular energy requirements and preventing excess ROS production. Also involved in endoplasmic reticulum-specific autophagic process, in selective removal of ER-associated degradation (ERAD) substrates. Plays a key role in ATG9 and ATG23 cycling through the pre-autophagosomal structure and is necessary to promote ATG18 binding to ATG9 through phosphorylation of ATG9. Catalyzes phosphorylation of ATG4, decreasing the interaction between ATG4 and ATG8 and impairing deconjugation of PE-conjugated forms of ATG8. The polypeptide is Serine/threonine-protein kinase atg1 (Neosartorya fischeri (strain ATCC 1020 / DSM 3700 / CBS 544.65 / FGSC A1164 / JCM 1740 / NRRL 181 / WB 181) (Aspergillus fischerianus)).